The chain runs to 141 residues: MRVLGIDYGDSRIGIAISDPLGWTAQALETITWRSDVEVPLKRISELVEEYGVKTVIVGFPKNMDGTVGARGEKTIEFIDLLQQRIKDIEVIKWDERLTTVAANRTMYEMGIKKSKKKLVVDQIAAVYILQGYLDSKGKVL.

This sequence belongs to the YqgF nuclease family.

Its subcellular location is the cytoplasm. In terms of biological role, could be a nuclease involved in processing of the 5'-end of pre-16S rRNA. The protein is Putative pre-16S rRNA nuclease of Acetivibrio thermocellus (strain ATCC 27405 / DSM 1237 / JCM 9322 / NBRC 103400 / NCIMB 10682 / NRRL B-4536 / VPI 7372) (Clostridium thermocellum).